Consider the following 179-residue polypeptide: Probable splicing factor, arginine/serine-rich 6 (179 aa).

One can recognise an RRM domain in the interval 3 to 76 (AKVYVGGLPS…VRARVELSTG (74 aa)). Residues 75 to 179 (TGQRRGGGGR…RSRSRSASPH (105 aa)) form a disordered region. Over residues 78 to 93 (RRGGGGRGGGFGGRGG) the composition is skewed to gly residues. Over residues 94-160 (GGRDRSPYRG…RSPQERDRSH (67 aa)) the composition is skewed to basic and acidic residues. The span at 161 to 173 (SKSRSRSRSRSRS) shows a compositional bias: basic residues.

Belongs to the splicing factor SR family. Extensively phosphorylated on serine residues in the RS domain.

It localises to the nucleus. Plays a functionally redundant role in shifting germ cell sexual differentiation in hermaprodites. Required for the development of somatic gonad structures and for progression from larval stage to adulthood. This is Probable splicing factor, arginine/serine-rich 6 (rsp-6) from Caenorhabditis elegans.